Consider the following 145-residue polypeptide: MLLPKRVKYRRVHRGKMRGNAKRGTTVHFGEFGLQALEASWITNRQIESARIAMTRYMKRGGKVWIKIFPHKPYTKKPLEVRMGSGKGAPEGWVAVVKPGKVMFEIAGVSEEVAREALRLASHKLPVKCKFVKREENGGDTNESN.

The protein belongs to the universal ribosomal protein uL16 family. In terms of assembly, part of the 50S ribosomal subunit.

In terms of biological role, binds 23S rRNA and is also seen to make contacts with the A and possibly P site tRNAs. The chain is Large ribosomal subunit protein uL16 from Exiguobacterium sp. (strain ATCC BAA-1283 / AT1b).